A 222-amino-acid chain; its full sequence is MQPSFWHEKWDAQQIGFHLSAVNPLLIQFWSQLKLPANSQVFVPLCGKSLDMCFLAEQGHDVLACELNDLAVSQFYQENNLTHTVEKVGEHKRYSTEQITIYQGDIFSLQNTNSVELAKTSAFYDRAALIAWPEAMRLQYAQQLACLIPAGSVGLLVTLDYPQAELNGPPFSVSDDWMQANMGADFEIERLACEDVLSDNPRFVKKQVSSLTESVYKLTRKG.

Residues tryptophan 10, leucine 45, glutamate 66, and arginine 126 each coordinate S-adenosyl-L-methionine.

Belongs to the class I-like SAM-binding methyltransferase superfamily. TPMT family.

Its subcellular location is the cytoplasm. The catalysed reaction is S-adenosyl-L-methionine + a thiopurine = S-adenosyl-L-homocysteine + a thiopurine S-methylether.. This Shewanella piezotolerans (strain WP3 / JCM 13877) protein is Thiopurine S-methyltransferase.